A 401-amino-acid chain; its full sequence is Argininosuccinate synthase (401 aa).

Residue 9–17 participates in ATP binding; sequence AYSGGLDTS. Y86 serves as a coordination point for L-citrulline. G116 serves as a coordination point for ATP. Residues T118, N122, and D123 each contribute to the L-aspartate site. Residue N122 coordinates L-citrulline. R126, S174, S183, E259, and Y271 together coordinate L-citrulline.

It belongs to the argininosuccinate synthase family. Type 1 subfamily. As to quaternary structure, homotetramer.

It localises to the cytoplasm. The catalysed reaction is L-citrulline + L-aspartate + ATP = 2-(N(omega)-L-arginino)succinate + AMP + diphosphate + H(+). Its pathway is amino-acid biosynthesis; L-arginine biosynthesis; L-arginine from L-ornithine and carbamoyl phosphate: step 2/3. This is Argininosuccinate synthase from Bacillus mycoides (strain KBAB4) (Bacillus weihenstephanensis).